The primary structure comprises 314 residues: Dioxygenase easH (314 aa).

Residues His-141, Asp-143, and His-217 each coordinate Fe cation.

The protein belongs to the PhyH family. As to quaternary structure, homodimer. Requires Fe cation as cofactor.

It functions in the pathway alkaloid biosynthesis; ergot alkaloid biosynthesis. Functionally, dioxygenase; part of the gene cluster that mediates the biosynthesis of fungal ergot alkaloid. DmaW catalyzes the first step of ergot alkaloid biosynthesis by condensing dimethylallyl diphosphate (DMAP) and tryptophan to form 4-dimethylallyl-L-tryptophan. The second step is catalyzed by the methyltransferase easF that methylates 4-dimethylallyl-L-tryptophan in the presence of S-adenosyl-L-methionine, resulting in the formation of 4-dimethylallyl-L-abrine. The catalase easC and the FAD-dependent oxidoreductase easE then transform 4-dimethylallyl-L-abrine to chanoclavine-I which is further oxidized by easD in the presence of NAD(+), resulting in the formation of chanoclavine-I aldehyde. Agroclavine dehydrogenase easG then mediates the conversion of chanoclavine-I aldehyde to agroclavine via a non-enzymatic adduct reaction: the substrate is an iminium intermediate that is formed spontaneously from chanoclavine-I aldehyde in the presence of glutathione. The presence of easA is not required to complete this reaction. Further conversion of agroclavine to paspalic acid is a two-step process involving oxidation of agroclavine to elymoclavine and of elymoclavine to paspalic acid, the second step being performed by the elymoclavine oxidase cloA. Paspalic acid is then further converted to D-lysergic acid. Ergopeptines are assembled from D-lysergic acid and three different amino acids by the D-lysergyl-peptide-synthetases composed each of a monomudular and a trimodular nonribosomal peptide synthetase subunit. LpsB and lpsC encode the monomodular subunits responsible for D-lysergic acid activation and incorporation into the ergopeptine backbone. LpsA1 and A2 subunits encode the trimodular nonribosomal peptide synthetase assembling the tripeptide portion of ergopeptines. LpsA1 is responsible for formation of the major ergopeptine, ergotamine, and lpsA2 for alpha-ergocryptine, the minor ergopeptine of the total alkaloid mixture elaborated by C.purpurea. D-lysergyl-tripeptides are assembled by the nonribosomal peptide synthetases and released as N-(D-lysergyl-aminoacyl)-lactams. Cyclolization of the D-lysergyl-tripeptides is performed by the Fe(2+)/2-ketoglutarate-dependent dioxygenase easH which introduces a hydroxyl group into N-(D-lysergyl-aminoacyl)-lactam at alpha-C of the aminoacyl residue followed by spontaneous condensation with the terminal lactam carbonyl group. The chain is Dioxygenase easH from Claviceps purpurea (strain 20.1) (Ergot fungus).